A 116-amino-acid chain; its full sequence is Appetite-regulating hormone (116 aa).

A signal peptide spans Met-1–Ala-23. Ser-26 carries the O-decanoyl serine; alternate lipid modification. Residue Ser-26 is the site of O-hexanoyl serine; alternate attachment. Ser-26 is lipidated: O-octanoyl serine; alternate. The tract at residues Ser-29 to Ala-67 is disordered. The segment covering Glu-31–Lys-42 has biased composition (basic and acidic residues). Positions Ala-51–Arg-74 are cleaved as a propeptide — removed in mature form. Leu-97 is modified (leucine amide). Residues Gly-98–Glu-116 constitute a propeptide, removed in mature form.

The protein belongs to the motilin family. O-octanoylated by GOAT/MBOAT4. O-octanoylation is essential for ghrelin activity. Post-translationally, amidation of Leu-97 is essential for obestatin activity.

Its subcellular location is the secreted. In terms of biological role, ghrelin is the ligand for growth hormone secretagogue receptor type 1 (GHSR). Induces the release of growth hormone from the pituitary. Has an appetite-stimulating effect, induces adiposity and stimulates gastric acid secretion. Involved in growth regulation. Its function is as follows. Obestatin may be the ligand for GPR39. May have an appetite-reducing effect resulting in decreased food intake. May reduce gastric emptying activity and jejunal motility. The sequence is that of Appetite-regulating hormone (GHRL) from Capra hircus (Goat).